The primary structure comprises 366 residues: Fe-S cluster assembly protein DRE2 (366 aa).

The N-terminal SAM-like domain stretch occupies residues 8-167 (AQGSGRFLLL…KPDFGAQQAV (160 aa)). The segment at 100–136 (RNRDNQIWGSGSDSAAGLGSSDGGGGGGGGEKKSSSE) is disordered. Residues 108-118 (GSGSDSAAGLG) are compositionally biased toward low complexity. Residues 119-128 (SSDGGGGGGG) show a composition bias toward gly residues. A linker region spans residues 168-258 (PLKLGRKKNL…EEELLGEFDM (91 aa)). The [2Fe-2S] cluster site is built by Cys-268, Cys-279, Cys-282, and Cys-284. The tract at residues 268–284 (CRPKAGKRRRACKDCTC) is fe-S binding site A. Positions 329, 332, 340, and 343 each coordinate [4Fe-4S] cluster. 2 short sequence motifs (cx2C motif) span residues 329-332 (CGNC) and 340-343 (CDGC). A fe-S binding site B region spans residues 329-343 (CGNCALGDAFRCDGC).

The protein belongs to the anamorsin family. Monomer. Interacts with TAH18. Interacts with MIA40. [2Fe-2S] cluster is required as a cofactor. It depends on [4Fe-4S] cluster as a cofactor.

It is found in the cytoplasm. The protein resides in the mitochondrion intermembrane space. Its function is as follows. Component of the cytosolic iron-sulfur (Fe-S) protein assembly (CIA) machinery required for the maturation of extramitochondrial Fe-S proteins. Part of an electron transfer chain functioning in an early step of cytosolic Fe-S biogenesis, facilitating the de novo assembly of a [4Fe-4S] cluster on the scaffold complex CFD1-NBP35. Electrons are transferred to DRE2 from NADPH via the FAD- and FMN-containing protein TAH18. TAH18-DRE2 are also required for the assembly of the diferric tyrosyl radical cofactor of ribonucleotide reductase (RNR), probably by providing electrons for reduction during radical cofactor maturation in the catalytic small subunit RNR2. The chain is Fe-S cluster assembly protein DRE2 from Paracoccidioides lutzii (strain ATCC MYA-826 / Pb01) (Paracoccidioides brasiliensis).